Reading from the N-terminus, the 380-residue chain is Phospho-N-acetylmuramoyl-pentapeptide-transferase (380 aa).

The next 11 helical transmembrane spans lie at 26–46 (IVAA…LFIE), 75–95 (MGGA…ADLG), 98–118 (LVWA…WDDW), 135–155 (LVLQ…DWQP), 160–180 (GFPF…PFVP), 183–203 (LFSP…VVAT), 222–242 (IVSS…IAGF), 259–279 (LGVF…YNTY), 283–303 (VFMG…LAVL), 311–331 (AILH…VWSF), and 357–377 (KIIV…LMSL).

Belongs to the glycosyltransferase 4 family. MraY subfamily. Mg(2+) is required as a cofactor.

The protein resides in the cell inner membrane. It carries out the reaction UDP-N-acetyl-alpha-D-muramoyl-L-alanyl-gamma-D-glutamyl-meso-2,6-diaminopimeloyl-D-alanyl-D-alanine + di-trans,octa-cis-undecaprenyl phosphate = di-trans,octa-cis-undecaprenyl diphospho-N-acetyl-alpha-D-muramoyl-L-alanyl-D-glutamyl-meso-2,6-diaminopimeloyl-D-alanyl-D-alanine + UMP. It functions in the pathway cell wall biogenesis; peptidoglycan biosynthesis. Catalyzes the initial step of the lipid cycle reactions in the biosynthesis of the cell wall peptidoglycan: transfers peptidoglycan precursor phospho-MurNAc-pentapeptide from UDP-MurNAc-pentapeptide onto the lipid carrier undecaprenyl phosphate, yielding undecaprenyl-pyrophosphoryl-MurNAc-pentapeptide, known as lipid I. This Anaeromyxobacter sp. (strain Fw109-5) protein is Phospho-N-acetylmuramoyl-pentapeptide-transferase.